Here is a 353-residue protein sequence, read N- to C-terminus: tRNA-specific 2-thiouridylase MnmA 2 (353 aa).

Residues A9–S16 and M35 contribute to the ATP site. C98 functions as the Nucleophile in the catalytic mechanism. The cysteines at positions 98 and 194 are disulfide-linked. Residue G122 coordinates ATP. The segment at K144–Q146 is interaction with tRNA. C194 (cysteine persulfide intermediate) is an active-site residue. Residues R300–Y301 are interaction with tRNA.

The protein belongs to the MnmA/TRMU family.

It localises to the cytoplasm. The enzyme catalyses S-sulfanyl-L-cysteinyl-[protein] + uridine(34) in tRNA + AH2 + ATP = 2-thiouridine(34) in tRNA + L-cysteinyl-[protein] + A + AMP + diphosphate + H(+). In terms of biological role, catalyzes the 2-thiolation of uridine at the wobble position (U34) of tRNA, leading to the formation of s(2)U34. This chain is tRNA-specific 2-thiouridylase MnmA 2, found in Clostridium botulinum (strain Langeland / NCTC 10281 / Type F).